The chain runs to 694 residues: MSEQHSVAVGKAANEHETAPRRNVRVKKRPLIRPLNSSASTLYEFALECFNKGGKRDGMAWRDVIEIHETKKTIVRKVDGKDKSIEKTWLYYEMSPYKMMTYQELIWVMHDMGRGLAKIGIKPNGEHKFHIFASTSHKWMKIFLGCISQGIPVVTAYDTLGESGLIHSMVETESAAIFTDNQLLAKMIVPLQSAKDIKFLIHNEPIDPNDRRQNGKLYKAAKDAINKIREVRPDIKIYSFEEVVKIGKKSKDEVKLHPPEPKDLACIMYTSGSISAPKGVVLTHYNIVSGIAGVGHNVFGWIGSTDRVLSFLPLAHIFELVFEFEAFYWNGILGYGSVKTLTNTSTRNCKGDLVEFKPTIMIGVAAVWETVRKAILEKISDLTPVLQKIFWSAYSMKEKSVPCTGFLSRMVFKKVRQATGGHLKYIMNGGSAISIDAQKFFSIVLCPMIIGYGLTETVANACVLEPDHFEYGIVGDLVGSVTAKLVDVKDLGYYAKNNQGELLLKGAPVCSEYYKNPIETAVSFTYDGWFRTGDIVEWTPKGQLKIIDRRKNLVKTLNGEYIALEKLESVYRSNSYVKNICVYADESRVKPVGIVVPNPGPLSKFAVKLRIMKKGEDIENYIHDKALRNAVFKEMIATAKSQGLVGIELLCGIVFFDEEWTPENGFVTSAQKLKRREILAAVKSEVERVYKENS.

The disordered stretch occupies residues 1 to 25 (MSEQHSVAVGKAANEHETAPRRNVR). Ser-2 is subject to N-acetylserine. 269–280 (YTSGSISAPKGV) contacts ATP. The FACS signature appears at 527 to 576 (DGWFRTGDIVEWTPKGQLKIIDRRKNLVKTLNGEYIALEKLESVYRSNSY).

This sequence belongs to the ATP-dependent AMP-binding enzyme family. Interacts with FRK1. It depends on Mg(2+) as a cofactor.

It localises to the cell membrane. The catalysed reaction is a long-chain fatty acid + ATP + CoA = a long-chain fatty acyl-CoA + AMP + diphosphate. The enzyme catalyses (9Z)-octadecenoate + ATP + CoA = (9Z)-octadecenoyl-CoA + AMP + diphosphate. It carries out the reaction hexadecanoate + ATP + CoA = hexadecanoyl-CoA + AMP + diphosphate. It catalyses the reaction (9Z)-hexadecenoate + ATP + CoA = (9Z)-hexadecenoyl-CoA + AMP + diphosphate. The catalysed reaction is (9Z)-tetradecenoate + ATP + CoA = (9Z)-tetradecenoyl-CoA + AMP + diphosphate. The enzyme catalyses (9Z,12Z)-octadecadienoate + ATP + CoA = (9Z,12Z)-octadecadienoyl-CoA + AMP + diphosphate. Its function is as follows. Activates endogenous long-chain fatty acids (LCFA) by esterification of the fatty acids into metabolically active CoA-thioesters for subsequent degradation or incorporation into phospholipids. Acts preferentially on C16 and C18 fatty acids with a cis-double bond at C-9-C-10. The protein is Long-chain-fatty-acid--CoA ligase 3 (FAA3) of Saccharomyces cerevisiae (strain ATCC 204508 / S288c) (Baker's yeast).